The sequence spans 72 residues: Translation initiation factor IF-1 (72 aa).

The S1-like domain occupies 1–72; that stretch reads MSKEDLIEFT…SKGRITFRFK (72 aa).

This sequence belongs to the IF-1 family. Component of the 30S ribosomal translation pre-initiation complex which assembles on the 30S ribosome in the order IF-2 and IF-3, IF-1 and N-formylmethionyl-tRNA(fMet); mRNA recruitment can occur at any time during PIC assembly.

Its subcellular location is the cytoplasm. Functionally, one of the essential components for the initiation of protein synthesis. Stabilizes the binding of IF-2 and IF-3 on the 30S subunit to which N-formylmethionyl-tRNA(fMet) subsequently binds. Helps modulate mRNA selection, yielding the 30S pre-initiation complex (PIC). Upon addition of the 50S ribosomal subunit IF-1, IF-2 and IF-3 are released leaving the mature 70S translation initiation complex. This chain is Translation initiation factor IF-1, found in Gluconobacter oxydans (strain 621H) (Gluconobacter suboxydans).